Reading from the N-terminus, the 509-residue chain is Histidine ammonia-lyase (509 aa).

Residues 144-146 (ASG) constitute a cross-link (5-imidazolinone (Ala-Gly)). 2,3-didehydroalanine (Ser) is present on S145.

This sequence belongs to the PAL/histidase family. Contains an active site 4-methylidene-imidazol-5-one (MIO), which is formed autocatalytically by cyclization and dehydration of residues Ala-Ser-Gly.

The protein resides in the cytoplasm. It catalyses the reaction L-histidine = trans-urocanate + NH4(+). It functions in the pathway amino-acid degradation; L-histidine degradation into L-glutamate; N-formimidoyl-L-glutamate from L-histidine: step 1/3. The sequence is that of Histidine ammonia-lyase from Pseudoalteromonas atlantica (strain T6c / ATCC BAA-1087).